The chain runs to 2187 residues: Non-reducing polyketide synthase phnA (2187 aa).

The interval 17 to 255 is N-terminal acylcarrier protein transacylase domain (SAT); that stretch reads LLFGDLSLAH…KYLDIDSPYH (239 aa). The Ketosynthase family 3 (KS3) domain maps to 383–819; it reads HSKIAIVGYS…GGNTAMLIED (437 aa). Active-site for beta-ketoacyl synthase activity residues include Cys555, His690, and His735. Residues 926–1226 form a malonyl-CoA:ACP transacylase (MAT) domain region; it reads RVAFAFTGQG…GMVKGTIDSR (301 aa). Ser1021 serves as the catalytic For acyl/malonyl transferase activity. The tract at residues 1321 to 1637 is product template (PT) domain; that stretch reads PCAQQIVEEF…PRRALDHLLP (317 aa). An N-terminal hotdog fold region spans residues 1324–1458; sequence QQIVEEFHDS…LDVVLYPGQQ (135 aa). The 310-residue stretch at 1324–1633 folds into the PKS/mFAS DH domain; that stretch reads QQIVEEFHDS…FQGVPRRALD (310 aa). His1356 functions as the Proton acceptor; for dehydratase activity in the catalytic mechanism. The tract at residues 1486-1633 is C-terminal hotdog fold; it reads TETHLIKRGM…FQGVPRRALD (148 aa). The active-site Proton donor; for dehydratase activity is Asp1546. Low complexity predominate over residues 1652–1669; that stretch reads KAPVAAVAPPRTPTKAAP. A disordered region spans residues 1652–1681; the sequence is KAPVAAVAPPRTPTKAAPQSRQAAPKQKRS. 2 consecutive Carrier domains span residues 1684-1758 and 1796-1874; these read SDVF…SNSD and SSES…YNVM. Position 1718 is an O-(pantetheine 4'-phosphoryl)serine (Ser1718). Positions 1754–1796 are disordered; it reads LSNSDEDDTPSGDSSTYEDSESQITSPASSVGPETPGGGEFGS. Residues 1757 to 1774 are compositionally biased toward acidic residues; the sequence is SDEDDTPSGDSSTYEDSE. Ser1834 is modified (O-(pantetheine 4'-phosphoryl)serine). The thioesterase (TE) domain stretch occupies residues 1906 to 2183; sequence SSLPQATSIL…PEMGEAVAEF (278 aa). Ser2009 functions as the For thioesterase activity in the catalytic mechanism.

It carries out the reaction 6 malonyl-CoA + acetyl-CoA + 5 H(+) = 3,6,7,9-tetrahydroxy-3-methyl-2,3-dihydro-1H-naphtho[2,1-b]pyran-1-one + 6 CO2 + 7 CoA + H2O. Its pathway is secondary metabolite biosynthesis. Its function is as follows. Non-reducing polyketide synthase; part of the gene cluster that mediates the biosynthesis of phenalenones such as herqueinone, compounds that have been reported to treat tumors, bacterial infections and/or mycoses, and rheumatic diseases. The non-reducing polyketide synthase phnA synthesizes the heptaketide backbone and cyclizes it into the angular, hemiketal-containing naphtho-gamma-pyrone prephenalenone. The product template (PT) domain of phnA catalyzes only the C4-C9 aldol condensation, which is unprecedented among known PT domains. The transformation of prephenalenone to phenalenones requires an FAD-dependent monooxygenase phnB, which catalyzes the C2 aromatic hydroxylation of prephenalenone and ring opening of the gamma-pyrone ring simultaneously. Subsequent intramolecular deprotonation of C3 phenolic oxygen accelerates phenalenone ring closure to yield the tricyclic phenalenone core with a C2 hydroxylation. The prenyltransferase phnF further catalyzes reverse C-prenylation of phenalenone by direct electrophilic substitution at C6, or possibly via first a forward O-prenylation of a neighboring phenol in phenalenone, followed by a Claisen rearrangement. The hydroalkoxylation enzyme phnH catalyzes the 5-exo-trig cyclization via acid catalysis after the spontaneous deprotonation of 7-OH, which leads to the formation of the dihydrobenzofuran atrovenetin. Atrovenetin is further converted to deoxyherqueinone by the O-methyltransferase phnC which can methylate C2-OH to stabilize the northern portion of the phenalenone core. Finally, the oxidoreductase phnG converts deoxyherqueinone to herqueinone via C6 hydroxylation. This chain is Non-reducing polyketide synthase phnA, found in Penicillium herquei.